Reading from the N-terminus, the 474-residue chain is tRNA-2-methylthio-N(6)-dimethylallyladenosine synthase (474 aa).

In terms of domain architecture, MTTase N-terminal spans 3 to 120 (KKLHIKTWGC…LPEMIEQIQR (118 aa)). Positions 12, 49, 83, 157, 161, and 164 each coordinate [4Fe-4S] cluster. The 233-residue stretch at 143-375 (RADGPTAFVS…QDRITQQAMR (233 aa)) folds into the Radical SAM core domain. Positions 378–441 (RQMLGTVQRI…TNSLRGEFVR (64 aa)) constitute a TRAM domain.

This sequence belongs to the methylthiotransferase family. MiaB subfamily. In terms of assembly, monomer. [4Fe-4S] cluster serves as cofactor.

It localises to the cytoplasm. The enzyme catalyses N(6)-dimethylallyladenosine(37) in tRNA + (sulfur carrier)-SH + AH2 + 2 S-adenosyl-L-methionine = 2-methylsulfanyl-N(6)-dimethylallyladenosine(37) in tRNA + (sulfur carrier)-H + 5'-deoxyadenosine + L-methionine + A + S-adenosyl-L-homocysteine + 2 H(+). Its function is as follows. Catalyzes the methylthiolation of N6-(dimethylallyl)adenosine (i(6)A), leading to the formation of 2-methylthio-N6-(dimethylallyl)adenosine (ms(2)i(6)A) at position 37 in tRNAs that read codons beginning with uridine. This Shewanella frigidimarina (strain NCIMB 400) protein is tRNA-2-methylthio-N(6)-dimethylallyladenosine synthase.